Consider the following 397-residue polypeptide: Aurora kinase A (397 aa).

The tract at residues 1-118 is disordered; sequence MDRCKENCVS…SIQKTEDSKK (118 aa). Polar residues-rich tracts occupy residues 29 to 55 and 84 to 102; these read QIPS…SQRV and RLSN…SGNN. 2 positions are modified to phosphoserine: Ser-40 and Ser-50. Residues 103-118 show a composition bias toward basic and acidic residues; the sequence is SEKEQTSIQKTEDSKK. One can recognise a Protein kinase domain in the interval 126-376; that stretch reads FDIGRPLGKG…LAEVLEHPWI (251 aa). ATP-binding positions include Lys-136, Lys-155, and 203 to 206; that span reads LEYA. Residue Asp-249 is the Proton acceptor of the active site. A Glycyl lysine isopeptide (Lys-Gly) (interchain with G-Cter in SUMO2) cross-link involves residue Lys-251. Residues 253–254 and Asp-267 each bind ATP; that span reads EN. The segment at 273 to 286 is activation segment; it reads HAPSSRRTTLCGTL. Thr-280 and Thr-281 each carry phosphothreonine. Phosphoserine; by PKA and PAK is present on Ser-335. Positions 378–387 are enriched in polar residues; sequence ANSSKPPTGH. A disordered region spans residues 378–397; it reads ANSSKPPTGHNSKEATSKSS. Residues 388-397 are compositionally biased toward basic and acidic residues; it reads NSKEATSKSS.

It belongs to the protein kinase superfamily. Ser/Thr protein kinase family. Aurora subfamily. As to quaternary structure, part of a complex composed of NEDD9, AURKA and CTTN; within the complex NEDD9 acts as a scaffold protein and is required for complex formation. Identified in a complex with AUNIP and NIN. Interacts with CPEB1, JTB, TACC1, TPX2, PPP2CA, as well as with the protein phosphatase type 1 (PP1) isoforms PPP1CA, PPP1CB and PPP1CC. Also interacts with its substrates ARHGEF2, BORA, KIF2A, PARD3, and p53/TP53. Interaction with BORA promotes phosphorylation of PLK1. Interacts with FBXL7 and CIMAP3. Interacts with GADD45A, competing with its oligomerization. Interacts (via C-terminus) with AUNIP (via C-terminus). Interacts with SIRT2. Interacts with FRY; this interaction facilitates AURKA-mediated PLK1 phosphorylation. Interacts with MYCN; interaction is phospho-independent and triggers AURKA activation; AURKA competes with FBXW7 for binding to unphosphorylated MYCN but not for binding to phosphorylated MYCN. Interacts with HNRNPU. Interacts with AAAS. Interacts with KLHL18 and CUL3. Interacts with FOXP1. Interacts with HDAC6; AURKA-mediated phosphorylation of HDAC6 promotes deacetylation of alpha-tubulin. Post-translationally, activated by phosphorylation at Thr-281; this brings about a change in the conformation of the activation segment. Phosphorylation at Thr-281 varies during the cell cycle and is highest during M phase. Autophosphorylated at Thr-281 upon TPX2 binding. Thr-281 can be phosphorylated by several kinases, including PAK and PKA. Protein phosphatase type 1 (PP1) binds AURKA and inhibits its activity by dephosphorylating Thr-281 during mitosis. Phosphorylation at Ser-335 decreases the kinase activity. PPP2CA controls degradation by dephosphorylating Ser-52 at the end of mitosis. Phosphorylated in embryonic brain neurons. Ubiquitinated by CHFR, leading to its degradation by the proteasome. Ubiquitinated by the anaphase-promoting complex (APC), leading to its degradation by the proteasome. Ubiquitinated by the E3 ubiquitin-protein ligase complex SCF(FBXL7) during mitosis, leading to its degradation by the proteasome. Ubiquitinated by the CUL3-KLHL18 ligase leading to its activation at the centrosome which is required for initiating mitotic entry. Ubiquitination mediated by CUL3-KLHL18 ligase does not lead to its degradation by the proteasome. In terms of tissue distribution, detected in neurons in brain cortex and hippocampus (at protein level). Expressed in mammary gland and tumor.

The protein localises to the cytoplasm. It localises to the cytoskeleton. It is found in the microtubule organizing center. The protein resides in the centrosome. Its subcellular location is the spindle pole. The protein localises to the centriole. It localises to the cell projection. It is found in the neuron projection. The protein resides in the cilium. Its subcellular location is the cilium basal body. The protein localises to the basolateral cell membrane. It carries out the reaction L-seryl-[protein] + ATP = O-phospho-L-seryl-[protein] + ADP + H(+). It catalyses the reaction L-threonyl-[protein] + ATP = O-phospho-L-threonyl-[protein] + ADP + H(+). Activation of CDK1, appears to be an upstream event of AURKA activation. Phosphatase inhibitor-2 (PPP1R2) and TPX2 act also as activators. Inactivated by the G2 checkpoint. Inhibited by GADD45A and p53/TP53, and through dephosphorylation by protein phosphatase type 1 (PP1). MLN8054 is also a potent and selective inhibitor. Activated during the early phase of cilia disassembly in the presence of FBXL7 and CIMAP3. Inhibited by the small molecule inhibitor VX-680. Mitotic serine/threonine kinase that contributes to the regulation of cell cycle progression. Associates with the centrosome and the spindle microtubules during mitosis and plays a critical role in various mitotic events including the establishment of mitotic spindle, centrosome duplication, centrosome separation as well as maturation, chromosomal alignment, spindle assembly checkpoint, and cytokinesis. Required for normal spindle positioning during mitosis and for the localization of NUMA1 and DCTN1 to the cell cortex during metaphase. Required for initial activation of CDK1 at centrosomes. Phosphorylates numerous target proteins, including ARHGEF2, BORA, BRCA1, CDC25B, DLGP5, HDAC6, KIF2A, LATS2, NDEL1, PARD3, PPP1R2, PLK1, RASSF1, TACC3, p53/TP53 and TPX2. Phosphorylates MCRS1 which is required for MCRS1-mediated kinetochore fiber assembly and mitotic progression. Regulates KIF2A tubulin depolymerase activity. Required for normal axon formation. Plays a role in microtubule remodeling during neurite extension. Important for microtubule formation and/or stabilization. Also acts as a key regulatory component of the p53/TP53 pathway, and particularly the checkpoint-response pathways critical for oncogenic transformation of cells, by phosphorylating and stabilizating p53/TP53. Phosphorylates its own inhibitors, the protein phosphatase type 1 (PP1) isoforms, to inhibit their activity. Inhibits cilia outgrowth. Required for cilia disassembly via phosphorylation of HDAC6 and subsequent deacetylation of alpha-tubulin. Regulates protein levels of the anti-apoptosis protein BIRC5 by suppressing the expression of the SCF(FBXL7) E3 ubiquitin-protein ligase substrate adapter FBXL7 through the phosphorylation of the transcription factor FOXP1. The polypeptide is Aurora kinase A (Rattus norvegicus (Rat)).